Reading from the N-terminus, the 824-residue chain is Translation initiation factor IF-2 (824 aa).

Residues 1-234 form a disordered region; sequence MSDQDGKKPL…RQKAMGGSVD (234 aa). 2 stretches are compositionally biased toward basic and acidic residues: residues 59 to 75 and 82 to 144; these read GGKRDKSVPDAEMDRRL and KARE…RRNA. A compositionally biased stretch (low complexity) spans 145 to 159; it reads PPEAAAPAVDPAAAA. The span at 170 to 186 shows a compositional bias: basic and acidic residues; that stretch reads ARREPERDNKRENRSRG. Positions 321–491 constitute a tr-type G domain; the sequence is PRPPVITIMG…ALQAELLELK (171 aa). Residues 330–337 are G1; it reads GHVDHGKT. Residue 330–337 coordinates GTP; the sequence is GHVDHGKT. The G2 stretch occupies residues 355–359; the sequence is GITQH. A G3 region spans residues 377 to 380; that stretch reads DTPG. Residues 377-381 and 431-434 contribute to the GTP site; these read DTPGH and NKID. The interval 431–434 is G4; that stretch reads NKID. Residues 467–469 are G5; sequence SAM.

It belongs to the TRAFAC class translation factor GTPase superfamily. Classic translation factor GTPase family. IF-2 subfamily.

It is found in the cytoplasm. Its function is as follows. One of the essential components for the initiation of protein synthesis. Protects formylmethionyl-tRNA from spontaneous hydrolysis and promotes its binding to the 30S ribosomal subunits. Also involved in the hydrolysis of GTP during the formation of the 70S ribosomal complex. This chain is Translation initiation factor IF-2, found in Jannaschia sp. (strain CCS1).